The sequence spans 146 residues: Snake venom vascular endothelial growth factor toxin (146 aa).

An N-terminal signal peptide occupies residues 1-24 (MAAYLLAVAILFCIQGWPLGTVQG). Residue Q25 is modified to Pyrrolidone carboxylic acid. 3 cysteine pairs are disulfide-bonded: C38/C80, C69/C115, and C73/C117. The tract at residues 119-146 (PRSASGVNSRKHKRNPEEGEPRAKFPFV) is disordered. Over residues 133–146 (NPEEGEPRAKFPFV) the composition is skewed to basic and acidic residues.

The protein belongs to the PDGF/VEGF growth factor family. Snake venom VEGF subfamily. In terms of assembly, homodimer; disulfide-linked. Interacts with VEGF receptor-1 (FLT1) with a high affinity, whereas it binds to VEGF receptor-2 (KDR) with a low affinity. Does not bind VEGF receptor-3 (FLT4). As to expression, expressed by the venom gland.

The protein resides in the secreted. Its function is as follows. Snake venom VEGFs may contribute to venom dispersion and prey subjugation by inducing vascular permeability and hypotension. This protein induces vascular permeability probably through VEGF (VEGFR) signaling. This protein also induces a drastic hypotensive effect after intravenous injection. The hypotension is mediated by nitric oxide (NO), which is produced by VEGF-activated endothelium NO synthase. Also induces angiogenesis in vitro. Like other crotalid VEGFs, this protein interacts with VEGF receptor-1 (FLT1) with a high affinity, whereas it binds to VEGF receptor-2 (KDR) with a low affinity. The protein is Snake venom vascular endothelial growth factor toxin of Bothrops insularis (Golden lancehead).